We begin with the raw amino-acid sequence, 343 residues long: UDP-N-acetylglucosamine--N-acetylmuramyl-(pentapeptide) pyrophosphoryl-undecaprenol N-acetylglucosamine transferase (343 aa).

Residues Thr-10 to Gly-12, Asn-113, Ser-174, and Gln-275 each bind UDP-N-acetyl-alpha-D-glucosamine.

It belongs to the glycosyltransferase 28 family. MurG subfamily.

The protein localises to the cell membrane. The catalysed reaction is di-trans,octa-cis-undecaprenyl diphospho-N-acetyl-alpha-D-muramoyl-L-alanyl-D-glutamyl-meso-2,6-diaminopimeloyl-D-alanyl-D-alanine + UDP-N-acetyl-alpha-D-glucosamine = di-trans,octa-cis-undecaprenyl diphospho-[N-acetyl-alpha-D-glucosaminyl-(1-&gt;4)]-N-acetyl-alpha-D-muramoyl-L-alanyl-D-glutamyl-meso-2,6-diaminopimeloyl-D-alanyl-D-alanine + UDP + H(+). It participates in cell wall biogenesis; peptidoglycan biosynthesis. In terms of biological role, cell wall formation. Catalyzes the transfer of a GlcNAc subunit on undecaprenyl-pyrophosphoryl-MurNAc-pentapeptide (lipid intermediate I) to form undecaprenyl-pyrophosphoryl-MurNAc-(pentapeptide)GlcNAc (lipid intermediate II). This Wolbachia sp. subsp. Brugia malayi (strain TRS) protein is UDP-N-acetylglucosamine--N-acetylmuramyl-(pentapeptide) pyrophosphoryl-undecaprenol N-acetylglucosamine transferase.